The primary structure comprises 237 residues: Protein lin-31 (237 aa).

Positions 12–103 (QKPPYSYIWL…SGMFENGSCL (92 aa)) form a DNA-binding region, fork-head. 2 disordered regions span residues 110–141 (RARG…LLPE) and 195–237 (NFES…ILSS). 2 stretches are compositionally biased toward low complexity: residues 206 to 216 (SEISGSGSSSS) and 227 to 237 (SSFSIESILSS).

It is found in the nucleus. Its function is as follows. Lin-31 regulates how vulval precursor cells choose their fate. It helps specify three alternative cell fates in vulval development. This chain is Protein lin-31 (lin-31), found in Caenorhabditis elegans.